Consider the following 145-residue polypeptide: Small ribosomal subunit protein eS19 (145 aa).

K23 carries the N6-acetyllysine modification. R67 is subject to Omega-N-methylarginine. 2 positions are modified to N6-acetyllysine: K111 and K115. K143 is modified (N6-succinyllysine).

Belongs to the eukaryotic ribosomal protein eS19 family. Component of the small ribosomal subunit. Part of the small subunit (SSU) processome, composed of more than 70 proteins and the RNA chaperone small nucleolar RNA (snoRNA) U3. Interacts with RPS19BP1; the interaction is direct and mediates the integration of RPS19 in state post-A1. Interacts with RPS19BP1.

It localises to the cytoplasm. It is found in the nucleus. The protein localises to the nucleolus. Component of the small ribosomal subunit. The ribosome is a large ribonucleoprotein complex responsible for the synthesis of proteins in the cell. Required for pre-rRNA processing and maturation of 40S ribosomal subunits. Part of the small subunit (SSU) processome, first precursor of the small eukaryotic ribosomal subunit. During the assembly of the SSU processome in the nucleolus, many ribosome biogenesis factors, an RNA chaperone and ribosomal proteins associate with the nascent pre-rRNA and work in concert to generate RNA folding, modifications, rearrangements and cleavage as well as targeted degradation of pre-ribosomal RNA by the RNA exosome. The protein is Small ribosomal subunit protein eS19 (RPS19) of Pongo abelii (Sumatran orangutan).